The primary structure comprises 114 residues: U17-barytoxin-Tl1d (114 aa).

The N-terminal stretch at 1–20 is a signal peptide; sequence MKTIIVFLSLLVLATKFGDA. The propeptide occupies 21–74; sequence NEGVNQEQMKEVIQNEFREDFLNEMAAMSLLQQLEAIESTLLEKEADRNSRQKR. Disulfide bonds link cysteine 75–cysteine 88, cysteine 82–cysteine 93, and cysteine 87–cysteine 108.

Belongs to the neurotoxin 14 (magi-1) family. 03 (ICK-30-40) subfamily. Expressed by the venom gland.

The protein resides in the secreted. In terms of biological role, ion channel inhibitor. The polypeptide is U17-barytoxin-Tl1d (Trittame loki (Brush-footed trapdoor spider)).